The following is a 223-amino-acid chain: Putative PAN domain-containing protein R486 (223 aa).

The N-terminal stretch at 1 to 23 (MSQTAIIIWIVVIIILLVLGGLG) is a signal peptide. A disordered region spans residues 39–73 (PTPINPPSSITPIQPINPPSSITPIQPSGPPSGGN). Positions 45-64 (PSSITPIQPINPPSSITPIQ) are enriched in low complexity. PAN domains are found at residues 80-155 (CPAY…EDGC) and 159-223 (ARYN…KMPH). 2 disulfides stabilise this stretch: Cys-80/Cys-155 and Cys-109/Cys-131. Asn-162, Asn-189, and Asn-213 each carry an N-linked (GlcNAc...) asparagine; by host glycan. A disulfide bridge connects residues Cys-182 and Cys-204.

The protein resides in the secreted. It localises to the virion. This chain is Putative PAN domain-containing protein R486, found in Acanthamoeba polyphaga mimivirus (APMV).